We begin with the raw amino-acid sequence, 644 residues long: uncharacterized protein (644 aa).

A disordered region spans residues 1–39 (MKANGLDNDPARTRMERTDIDSEHPEAQPLLNNNHRTLG). The Cytoplasmic portion of the chain corresponds to 1–90 (MKANGLDNDP…ILNILILINT (90 aa)). Residues 9-26 (DPARTRMERTDIDSEHPE) show a composition bias toward basic and acidic residues. Phosphoserine occurs at positions 22, 56, and 63. A helical membrane pass occupies residues 91-111 (IWLVTTLISDFFFNINILFGF). Residues 112–122 (SNRYASFNDLT) are Vacuolar-facing. Residues 123-143 (LIFISIIANSFNLWFNKLGLY) traverse the membrane as a helical segment. Residues 144–147 (SALD) are Cytoplasmic-facing. A helical membrane pass occupies residues 148–168 (YSLNVTLCVLTLFNLALTYLI). The Vacuolar portion of the chain corresponds to 169–174 (KYTRQR). Residues 175–195 (IGFVGTFTYLWTSFSFFIGAI) form a helical membrane-spanning segment. Residues 196–271 (LDWYLLFYNN…EWVSIGFRNT (76 aa)) lie on the Cytoplasmic side of the membrane. The disordered stretch occupies residues 225 to 251 (NENHTNSTENRDRSQYGSGSPTPTHRS). Over residues 239–251 (QYGSGSPTPTHRS) the composition is skewed to polar residues. S244 carries the post-translational modification Phosphoserine. Residues 272-292 (IKFLILIFFALFTLNTLLTTL) traverse the membrane as a helical segment. Residues 293-644 (DTYRLTHKLP…IGELGKLTED (352 aa)) are Vacuolar-facing. The AB hydrolase-1 domain occupies 348-619 (PIILFEHGGY…IVEGGHEIYK (272 aa)). Positions 469 to 492 (GRGDGDDGDDGNGNDGDGRNHDKT) are disordered.

The protein resides in the vacuole membrane. This is an uncharacterized protein from Saccharomyces cerevisiae (strain YJM789) (Baker's yeast).